The chain runs to 212 residues: Small ribosomal subunit protein eS1 (212 aa).

The protein belongs to the eukaryotic ribosomal protein eS1 family.

This chain is Small ribosomal subunit protein eS1, found in Staphylothermus marinus (strain ATCC 43588 / DSM 3639 / JCM 9404 / F1).